A 207-amino-acid chain; its full sequence is Small ribosomal subunit protein uS2 (207 aa).

Belongs to the universal ribosomal protein uS2 family.

The chain is Small ribosomal subunit protein uS2 from Nitrosopumilus maritimus (strain SCM1).